Here is a 266-residue protein sequence, read N- to C-terminus: Energy-coupling factor transporter transmembrane protein EcfT 1 (266 aa).

5 helical membrane passes run 33 to 53 (IGIL…LFTL), 73 to 93 (LIWL…GGTI), 107 to 127 (LLNG…STVI), 152 to 172 (VPVN…PTLM), and 243 to 263 (HFGD…LVIL).

It belongs to the energy-coupling factor EcfT family. Forms a stable energy-coupling factor (ECF) transporter complex composed of 2 membrane-embedded substrate-binding proteins (S component), 2 ATP-binding proteins (A component) and 2 transmembrane proteins (T component). May be able to interact with more than 1 S component at a time.

The protein resides in the cell membrane. Transmembrane (T) component of an energy-coupling factor (ECF) ABC-transporter complex. Unlike classic ABC transporters this ECF transporter provides the energy necessary to transport a number of different substrates. In Listeria monocytogenes serotype 1/2a (strain 08-5578), this protein is Energy-coupling factor transporter transmembrane protein EcfT 1.